Consider the following 562-residue polypeptide: Arginine--tRNA ligase (562 aa).

The short motif at 129 to 139 (ANPTGPLHVGH) is the 'HIGH' region element.

It belongs to the class-I aminoacyl-tRNA synthetase family. Monomer.

The protein resides in the cytoplasm. It catalyses the reaction tRNA(Arg) + L-arginine + ATP = L-arginyl-tRNA(Arg) + AMP + diphosphate. This chain is Arginine--tRNA ligase (argS), found in Xylella fastidiosa (strain 9a5c).